The chain runs to 533 residues: MAPTIQTQAQREDGHRPNSHRTLPERSGVVCRVKYCNSLPDIPFDPKFITYPFDQNRFVQYKATSLEKQHKHDLLTEPDLGVTIDLINPDTYRIDPNVLLDPADEKLLEEEIQAPTSSKRSQQHAKVVPWMRKTEYISTEFNRYGISNEKPEVKIGVSVKQQFTEEEIYKDRDSQITAIEKTFEDAQKSISQHYSKPRVTPVEVMPVFPDFKMWINPCAQVIFDSDPAPKDTSGAAALEMMSQAMIRGMMDEEGNQFVAYFLPVEETLKKRKRDQEEEMDYAPDDVYDYKIAREYNWNVKNKASKGYEENYFFIFREGDGVYYNELETRVRLSKRRAKAGVQSGTNALLVVKHRDMNEKELEAQEARKAQLENHEPEEEEEEEMETEEKEAGGSDEEQEKGSSSEKEGSEDERSGSESEREEGDRDEASDKSGSGEDESSEDEARAARDKEEIFGSDADSEDDADSDDEDRGQAQGGSDNDSDSGSNGGGQRSRSHSRSRSASPFPSGSEHSAQEDGSEAAAPDSSEADSDSD.

Residues 1 to 23 form a disordered region; that stretch reads MAPTIQTQAQREDGHRPNSHRTL. Position 117 is a phosphoserine (S117). Glycyl lysine isopeptide (Lys-Gly) (interchain with G-Cter in SUMO2) cross-links involve residues K133 and K154. Positions 352–400 form a coiled coil; sequence KHRDMNEKELEAQEARKAQLENHEPEEEEEEEMETEEKEAGGSDEEQEK. Over residues 361–374 the composition is skewed to basic and acidic residues; the sequence is LEAQEARKAQLENH. Residues 361-533 form a disordered region; the sequence is LEAQEARKAQ…DSSEADSDSD (173 aa). Residues 375–398 are compositionally biased toward acidic residues; that stretch reads EPEEEEEEEMETEEKEAGGSDEEQ. Composition is skewed to basic and acidic residues over residues 399 to 434 and 442 to 453; these read EKGS…KSGS and DEARAARDKEEI. At S456 the chain carries Phosphoserine. Residues 458–470 are compositionally biased toward acidic residues; that stretch reads ADSEDDADSDDED. Low complexity-rich tracts occupy residues 476–485 and 500–509; these read GGSDNDSDSG and RSASPFPSGS.

It belongs to the PAF1 family. In terms of assembly, component of the PAF1 complex, which consists of CDC73, PAF1, LEO1, CTR9, RTF1 and SKIC8. The PAF1 complex interacts with PHF5A. Interacts with POLR2A, TCEA1, SKIC3, KMT2A/MLL1, SUPT5H, RNF20 and RNF40. Interacts with UBE2E1.

It is found in the nucleus. Functionally, component of the PAF1 complex (PAF1C) which has multiple functions during transcription by RNA polymerase II and is implicated in regulation of development and maintenance of embryonic stem cell pluripotency. PAF1C associates with RNA polymerase II through interaction with POLR2A CTD non-phosphorylated and 'Ser-2'- and 'Ser-5'-phosphorylated forms and is involved in transcriptional elongation, acting both independently and synergistically with TCEA1 and in cooperation with the DSIF complex and HTATSF1. PAF1C is required for transcription of Hox and Wnt target genes. PAF1C is involved in hematopoiesis and stimulates transcriptional activity of KMT2A/MLL1. PAF1C is involved in histone modifications such as ubiquitination of histone H2B and methylation on histone H3 'Lys-4' (H3K4me3). PAF1C recruits the RNF20/40 E3 ubiquitin-protein ligase complex and the E2 enzyme UBE2A or UBE2B to chromatin which mediate monoubiquitination of 'Lys-120' of histone H2B (H2BK120ub1); UB2A/B-mediated H2B ubiquitination is proposed to be coupled to transcription. PAF1C is involved in mRNA 3' end formation probably through association with cleavage and poly(A) factors. Connects PAF1C with the RNF20/40 E3 ubiquitin-protein ligase complex. Involved in polyadenylation of mRNA precursors. This chain is RNA polymerase II-associated factor 1 homolog (PAF1), found in Pongo abelii (Sumatran orangutan).